The primary structure comprises 369 residues: Superinfection exclusion protein (369 aa).

The first 15 residues, 1-15 (MIALLILSLTCSVST), serve as a signal peptide directing secretion.

The protein belongs to the serpin family. Orthopoxvirus OPG040 subfamily. In terms of assembly, interacts with A56 protein.

The protein localises to the virion membrane. It localises to the host cell membrane. Functionally, prevents cell to cell fusion via its interaction with A56 protein. The A56-K2 complex associates with components of the entry fusion complex (EFC) presumably to avoid superinfection and syncytium formation. The sequence is that of Superinfection exclusion protein (OPG040) from Vaccinia virus (strain Copenhagen) (VACV).